An 800-amino-acid polypeptide reads, in one-letter code: Internalin A (800 aa).

The signal sequence occupies residues 1–35; the sequence is MRKKRYVWLKSILVAILVFGSGVWINTSNGTNAQA. In terms of domain architecture, LRRNT spans 36–76; sequence ATITQDTPINQIFTDAALAEKMKTVLGKTNVTDTVSQTDLD. 15 LRR repeats span residues 77-98, 99-120, 121-142, 143-164, 165-186, 187-207, 208-229, 230-251, 252-273, 274-295, 296-317, 318-339, 340-361, 362-383, and 384-405; these read QVTT…EYLN, NLTQ…KDLT, KLVD…ANLT, NLTG…KNLT, NLNR…SGLT, NLQQ…ANLT, TLER…AKLT, NLES…GILT, NLDE…ASLT, NLTD…SGLT, KLTE…AGLT, ALTN…SNLK, NLTY…SSLT, KLQR…ANLT, and NINW…ANLT. An LRRCT domain is found at 416–505; sequence AWTNAPVNYK…AIFNAKFHVD (90 aa). One copy of the B-1 repeat lies at 518–587; it reads LLTEPAKPVK…TTSQTVDYQG (70 aa). The interval 518–706 is 3 X approximate tandem repeats, type B; it reads LLTEPAKPVK…ITLYAQFTKN (189 aa). One copy of the B-2 repeat lies at 588-657; the sequence is LLQEPTPPTK…STTQAVDYQG (70 aa). Residues 658 to 706 form a B-3 repeat; sequence LLKEPKAPTKAGYTFKGWYDEKTDGKKWDFATDKMPANDITLYAQFTKN. Residues 705–757 form a disordered region; sequence KNPVAPPTTGGNTPPTTNNGGNTTPPSANIPGSDTSNTSTGNSASTTSTMNAY. A compositionally biased stretch (low complexity) spans 711-753; the sequence is PTTGGNTPPTTNNGGNTTPPSANIPGSDTSNTSTGNSASTTST. Positions 767–771 match the LPXTG sorting signal motif; that stretch reads LPTTG. The residue at position 770 (T770) is a Pentaglycyl murein peptidoglycan amidated threonine. A propeptide spans 771–800 (removed by sortase A); that stretch reads GDSDNALYLLLGLLAVGTAMALTKKARASK.

It belongs to the internalin family.

The protein localises to the secreted. Its subcellular location is the cell wall. Its function is as follows. Mediates the entry of Listeria monocytogenes into cells. Binds to host receptor cadherin-1 (E-cadherin, CDH1). The chain is Internalin A (inlA) from Listeria monocytogenes serotype 1/2a (strain 10403S).